A 269-amino-acid chain; its full sequence is MRTAFYISDGTAITSEVFGHATLSLFPVEFNHKTIPFVETEEKAHQIKELINATAKRDGEKPLIFFTFVNYNLTEIISSANAVCYDFLTTYSEKIEKELNVAPVPKIHRTHSIHEKSYDFRIDAVNYALMNDDGGNIKNYGEADIILIGVSRSGKTPTSLYLALQYGIKAANYPITEDDLETEGLPKCLIPFKHKLFGLTIDPERLAAIRDRRMANSKYASIRQCRIEVREVEMLYKRNRIPFLNSTHHSVEEISAKIISDTDLERRKY.

Position 149–156 (149–156 (GVSRSGKT)) interacts with ADP.

It belongs to the pyruvate, phosphate/water dikinase regulatory protein family. PSRP subfamily.

It carries out the reaction [pyruvate, water dikinase] + ADP = [pyruvate, water dikinase]-phosphate + AMP + H(+). The catalysed reaction is [pyruvate, water dikinase]-phosphate + phosphate + H(+) = [pyruvate, water dikinase] + diphosphate. In terms of biological role, bifunctional serine/threonine kinase and phosphorylase involved in the regulation of the phosphoenolpyruvate synthase (PEPS) by catalyzing its phosphorylation/dephosphorylation. The chain is Putative phosphoenolpyruvate synthase regulatory protein from Pseudoalteromonas translucida (strain TAC 125).